Reading from the N-terminus, the 782-residue chain is Cleavage and polyadenylation specificity factor subunit 2 (782 aa).

Basic and acidic residues predominate over residues 407–416 (KKLEQSKEAD). The interval 407–452 (KKLEQSKEADIDSSDESDAEEDIDQPSAHKTKHDLMMKGEGSRKGS) is disordered. The segment covering 417 to 430 (IDSSDESDAEEDID) has biased composition (acidic residues). Phosphoserine is present on residues Ser-419, Ser-420, and Ser-423. The segment covering 439–449 (HDLMMKGEGSR) has biased composition (basic and acidic residues). Position 660 is a phosphoserine (Ser-660).

It belongs to the metallo-beta-lactamase superfamily. RNA-metabolizing metallo-beta-lactamase-like family. CPSF2/YSH1 subfamily. As to quaternary structure, component of the cleavage and polyadenylation specificity factor (CPSF) complex, composed of CPSF1, CPSF2, CPSF3, CPSF4 and FIP1L1. Interacts with CPSF3, CSTF2 and SYMPK. Interacts with ZC3H3.

It localises to the nucleus. Its function is as follows. Component of the cleavage and polyadenylation specificity factor (CPSF) complex that play a key role in pre-mRNA 3'-end formation, recognizing the AAUAAA signal sequence and interacting with poly(A) polymerase and other factors to bring about cleavage and poly(A) addition. Involved in the histone 3' end pre-mRNA processing. The chain is Cleavage and polyadenylation specificity factor subunit 2 (CPSF2) from Bos taurus (Bovine).